The primary structure comprises 194 residues: Translation machinery-associated protein 22 (194 aa).

The 72-residue stretch at 102-173 (VQIKRVERNK…DVQDWLLEVY (72 aa)) folds into the SUI1 domain.

This sequence belongs to the DENR family. In terms of assembly, interacts with the 40S ribosomal subunit.

It is found in the cytoplasm. The polypeptide is Translation machinery-associated protein 22 (tma22) (Aspergillus oryzae (strain ATCC 42149 / RIB 40) (Yellow koji mold)).